The primary structure comprises 503 residues: Hexose transporter 1 (503 aa).

The Cytoplasmic portion of the chain corresponds to 1–26; the sequence is MKKSSKEISPSQSLKNGGSDHFFNTS. The helical transmembrane segment at 27–47 threads the bilayer; that stretch reads LMYVLAACLASFIFGYQVSVL. Topologically, residues 48 to 76 are extracellular; sequence NTIKNFIVIEFGWCTGNKVECDDSTLKSS. Cys-61 and Cys-68 are oxidised to a cystine. The helical transmembrane segment at 77-97 threads the bilayer; the sequence is FLLASVFIGAVVGSGFSDYLV. The Cytoplasmic portion of the chain corresponds to 98–102; sequence QHGRR. The chain crosses the membrane as a helical span at residues 103 to 123; sequence FSLLVIYNFFILVSILTSITH. Residues 124–132 are Extracellular-facing; that stretch reads HFHTILFSR. The helical transmembrane segment at 133-153 threads the bilayer; sequence LLSGFGVGLITVSVPMYISEM. Residues 154 to 163 lie on the Cytoplasmic side of the membrane; it reads THKDKKGAYG. Residues 164–184 form a helical membrane-spanning segment; that stretch reads VLHQLFITFGILVAVLLGMAM. Gln-167 contacts alpha-D-glucose. Gln-167 contributes to the beta-D-glucose binding site. Over 185 to 205 the chain is Extracellular; that stretch reads GEAPDAKSVDALGEFQKIWWR. The chain crosses the membrane as a helical span at residues 206 to 226; sequence LMFFFPCLISILGIVLLTFFY. Residues 227 to 291 lie on the Cytoplasmic side of the membrane; it reads KEETPYYLFE…RAMQIPSYRN (65 aa). Residues 292–312 traverse the membrane as a helical segment; that stretch reads VILLGCILSGLQQFTGINVLV. Residues Gln-303, Gln-304, and Asn-309 each contribute to the alpha-D-glucose site. Beta-D-glucose is bound at residue Gln-303. Asn-309 is a binding site for beta-D-glucose. The Extracellular segment spans residues 313-329; sequence SNSNELYKEFLSNKLIT. A helical transmembrane segment spans residues 330–350; it reads TLSVIMTVVNFLMTFPAIYIV. Residue Asn-339 participates in beta-D-glucose binding. Topologically, residues 351–356 are cytoplasmic; sequence EKLGRK. Residues 357–377 form a helical membrane-spanning segment; the sequence is TLLLCGCAGVTLAAFLPTAIA. The Extracellular segment spans residues 378–391; it reads NQIDRSSDLVRNLS. The helical transmembrane segment at 392–412 threads the bilayer; sequence IAATFVMIISFAVSYGPVLWI. Trp-411 contacts alpha-D-glucose. Residues 413-428 lie on the Cytoplasmic side of the membrane; it reads YLHEMFPSEIKDSAAS. Residues 429–449 form a helical membrane-spanning segment; it reads LASLVNWVCAIIVVFPSDIII. At 450–454 the chain is on the extracellular side; the sequence is KKSPT. The chain crosses the membrane as a helical span at residues 455 to 475; that stretch reads ILFFIFSGMSILSFLFIFFFI. Topologically, residues 476 to 503 are cytoplasmic; it reads KETKGGEIGTSPYITMEERQKHMGKSAV.

The protein belongs to the major facilitator superfamily. Sugar transporter (TC 2.A.1.1) family. As to quaternary structure, homodimer.

The protein localises to the cell membrane. It carries out the reaction D-glucose(out) = D-glucose(in). The catalysed reaction is D-fructose(out) = D-fructose(in). The enzyme catalyses D-galactose(in) = D-galactose(out). It catalyses the reaction D-mannose(out) = D-mannose(in). It carries out the reaction D-glucosamine(out) = D-glucosamine(in). The catalysed reaction is D-xylose(out) = D-xylose(in). Inhibited by compound 3361 (3-O-((undec-10-en)-1-yl)-D-glucose). Its function is as follows. Sodium-independent facilitative hexose transporter. Can transport D-glucose and D-fructose. Can transport D-mannose, D-galactose, D-xylose and D-glucosamine. The protein is Hexose transporter 1 of Plasmodium vivax.